The following is a 63-amino-acid chain: Large ribosomal subunit protein bL28 (63 aa).

The segment covering 11-20 (GNNSGASVSH) has biased composition (polar residues). Residues 11 to 30 (GNNSGASVSHSNKKTKRKWK) are disordered. Over residues 21-30 (SNKKTKRKWK) the composition is skewed to basic residues.

This sequence belongs to the bacterial ribosomal protein bL28 family.

The protein is Large ribosomal subunit protein bL28 of Natranaerobius thermophilus (strain ATCC BAA-1301 / DSM 18059 / JW/NM-WN-LF).